Reading from the N-terminus, the 346-residue chain is MSTPTTPLSYKDAGVDIDAGNALVNNIKSAVKRTRRPEVMGNLGGFGALCELPTKYKHPVLVSGTDGVGTKLRLAIDFKKHDNVGIDLVAMCSNDLIVSGAEPLFFLDYYATGKLDVEVATAVVKGIAEGCVQSGCALIGGETAEMPGMYEGDDYDLAGFCVGVVEKEEIIDGTKVQDGDALIALASSGPHSNGFSLIRKVLEVSKADPELELAGKPLIDHLLEPTKIYVKSLLKLLEQHDVHAMSHITGGGFWENIPRVLPEDCKAVVNSDSWQWPVVFNWLMENGNISEFEMYRTFNCGVGMVIALPADKVDSALALLKTEGENAWLIGNIAKRNGEEEQVEIL.

It belongs to the AIR synthase family.

The protein resides in the cytoplasm. It catalyses the reaction 2-formamido-N(1)-(5-O-phospho-beta-D-ribosyl)acetamidine + ATP = 5-amino-1-(5-phospho-beta-D-ribosyl)imidazole + ADP + phosphate + H(+). It functions in the pathway purine metabolism; IMP biosynthesis via de novo pathway; 5-amino-1-(5-phospho-D-ribosyl)imidazole from N(2)-formyl-N(1)-(5-phospho-D-ribosyl)glycinamide: step 2/2. The sequence is that of Phosphoribosylformylglycinamidine cyclo-ligase from Shewanella halifaxensis (strain HAW-EB4).